The primary structure comprises 142 residues: MCHAAPAAPASGRGLPHGGGNFSGAAGSRSVGATFEQRARQFLERRGLAFVAANVTMRGGELDLVMRTPDGTLVFVEVRARRSTRHGGAAASVGWRKRRRLVKAALHFWVRHGKGAACRFDVVAFEAGRLEWLHDAFRADDV.

Residues 1–23 (MCHAAPAAPASGRGLPHGGGNFS) are disordered.

The protein belongs to the UPF0102 family.

This Burkholderia ambifaria (strain ATCC BAA-244 / DSM 16087 / CCUG 44356 / LMG 19182 / AMMD) (Burkholderia cepacia (strain AMMD)) protein is UPF0102 protein Bamb_0202.